Consider the following 146-residue polypeptide: Hut operon positive regulatory protein (146 aa).

This sequence belongs to the HutP family. Homohexamer.

Antiterminator that binds to cis-acting regulatory sequences on the mRNA in the presence of histidine, thereby suppressing transcription termination and activating the hut operon for histidine utilization. This is Hut operon positive regulatory protein from Bacillus cereus (strain AH820).